A 229-amino-acid polypeptide reads, in one-letter code: ATP-dependent Clp protease proteolytic subunit (229 aa).

The active-site Nucleophile is Ser-101. His-126 is an active-site residue.

The protein belongs to the peptidase S14 family. Component of the chloroplastic Clp protease core complex.

Its subcellular location is the plastid. It localises to the chloroplast stroma. It catalyses the reaction Hydrolysis of proteins to small peptides in the presence of ATP and magnesium. alpha-casein is the usual test substrate. In the absence of ATP, only oligopeptides shorter than five residues are hydrolyzed (such as succinyl-Leu-Tyr-|-NHMec, and Leu-Tyr-Leu-|-Tyr-Trp, in which cleavage of the -Tyr-|-Leu- and -Tyr-|-Trp bonds also occurs).. Functionally, cleaves peptides in various proteins in a process that requires ATP hydrolysis. Has a chymotrypsin-like activity. Plays a major role in the degradation of misfolded proteins. In Mesostigma viride (Green alga), this protein is ATP-dependent Clp protease proteolytic subunit.